Reading from the N-terminus, the 259-residue chain is Enolase-phosphatase E1 (259 aa).

The Mg(2+) site is built by Asp-16 and Glu-18. Residues 151 to 152 and Lys-185 contribute to the substrate site; that span reads SS. Asp-210 provides a ligand contact to Mg(2+).

Belongs to the HAD-like hydrolase superfamily. MasA/MtnC family. Monomer. Mg(2+) serves as cofactor.

The protein resides in the cytoplasm. Its subcellular location is the nucleus. It catalyses the reaction 5-methylsulfanyl-2,3-dioxopentyl phosphate + H2O = 1,2-dihydroxy-5-(methylsulfanyl)pent-1-en-3-one + phosphate. The protein operates within amino-acid biosynthesis; L-methionine biosynthesis via salvage pathway; L-methionine from S-methyl-5-thio-alpha-D-ribose 1-phosphate: step 3/6. It functions in the pathway amino-acid biosynthesis; L-methionine biosynthesis via salvage pathway; L-methionine from S-methyl-5-thio-alpha-D-ribose 1-phosphate: step 4/6. Bifunctional enzyme that catalyzes the enolization of 2,3-diketo-5-methylthiopentyl-1-phosphate (DK-MTP-1-P) into the intermediate 2-hydroxy-3-keto-5-methylthiopentenyl-1-phosphate (HK-MTPenyl-1-P), which is then dephosphorylated to form the acireductone 1,2-dihydroxy-3-keto-5-methylthiopentene (DHK-MTPene). This is Enolase-phosphatase E1 (enoph1) from Xenopus tropicalis (Western clawed frog).